A 103-amino-acid chain; its full sequence is Co-chaperonin GroES (103 aa).

Belongs to the GroES chaperonin family. Heptamer of 7 subunits arranged in a ring. Interacts with the chaperonin GroEL.

It is found in the cytoplasm. In terms of biological role, together with the chaperonin GroEL, plays an essential role in assisting protein folding. The GroEL-GroES system forms a nano-cage that allows encapsulation of the non-native substrate proteins and provides a physical environment optimized to promote and accelerate protein folding. GroES binds to the apical surface of the GroEL ring, thereby capping the opening of the GroEL channel. In Prochlorococcus marinus (strain MIT 9211), this protein is Co-chaperonin GroES.